The chain runs to 264 residues: Glutamate racemase (264 aa).

Residues 12-13 and 44-45 each bind substrate; these read DS and YG. Cys-75 functions as the Proton donor/acceptor in the catalytic mechanism. 76–77 is a binding site for substrate; that stretch reads NT. Cys-186 serves as the catalytic Proton donor/acceptor. 187–188 contributes to the substrate binding site; it reads TH.

Belongs to the aspartate/glutamate racemases family.

It catalyses the reaction L-glutamate = D-glutamate. The protein operates within cell wall biogenesis; peptidoglycan biosynthesis. In terms of biological role, provides the (R)-glutamate required for cell wall biosynthesis. The chain is Glutamate racemase from Stutzerimonas stutzeri (strain A1501) (Pseudomonas stutzeri).